Consider the following 318-residue polypeptide: Methionyl-tRNA formyltransferase (318 aa).

(6S)-5,6,7,8-tetrahydrofolate is bound at residue 112–115 (SLLP).

Belongs to the Fmt family.

It carries out the reaction L-methionyl-tRNA(fMet) + (6R)-10-formyltetrahydrofolate = N-formyl-L-methionyl-tRNA(fMet) + (6S)-5,6,7,8-tetrahydrofolate + H(+). In terms of biological role, attaches a formyl group to the free amino group of methionyl-tRNA(fMet). The formyl group appears to play a dual role in the initiator identity of N-formylmethionyl-tRNA by promoting its recognition by IF2 and preventing the misappropriation of this tRNA by the elongation apparatus. The chain is Methionyl-tRNA formyltransferase from Mycobacterium leprae (strain Br4923).